The chain runs to 425 residues: MDIHDYMQTLGRQARAASRVLATASTADKNAALVAMAAAIREQTGELLAANARDLDEARAAGLEAALIDRLTLTAKGIEAMAEGLEQVAGLPDPIGEITDVKRRPSGIQVGKMRVPLGVIGIIYEARPNVTADAAALCLKSGNAAILRGGKEALHCNQAIAQCVRTGLAAAGLPETSVQVVETTDRAAVGHLITMPEFVDVIVPRGGKGLIERISKEARVPVIKHLDGNCHVYIDRDADVAKVVPIVENAKTQRYGTCNTAESLLVAREVAPRLLPEIGRMLATKGVEMRGCEQSLAILRAAGIAADKLRAASEQDWSEEYLAPVIAVKVVADLDEAIAHINTYSSGHTEAIVTENYTSAMRFLREVDSSSVMVNASTRFADGFEYGLGAEIGISTDKIHARGPVGLDGLTSQKWIVFGNGEIRG.

It belongs to the gamma-glutamyl phosphate reductase family.

Its subcellular location is the cytoplasm. The enzyme catalyses L-glutamate 5-semialdehyde + phosphate + NADP(+) = L-glutamyl 5-phosphate + NADPH + H(+). Its pathway is amino-acid biosynthesis; L-proline biosynthesis; L-glutamate 5-semialdehyde from L-glutamate: step 2/2. Catalyzes the NADPH-dependent reduction of L-glutamate 5-phosphate into L-glutamate 5-semialdehyde and phosphate. The product spontaneously undergoes cyclization to form 1-pyrroline-5-carboxylate. This chain is Gamma-glutamyl phosphate reductase, found in Aromatoleum aromaticum (strain DSM 19018 / LMG 30748 / EbN1) (Azoarcus sp. (strain EbN1)).